A 151-amino-acid polypeptide reads, in one-letter code: Large ribosomal subunit protein bL9 (151 aa).

Belongs to the bacterial ribosomal protein bL9 family.

Its function is as follows. Binds to the 23S rRNA. This chain is Large ribosomal subunit protein bL9, found in Bordetella pertussis (strain Tohama I / ATCC BAA-589 / NCTC 13251).